The sequence spans 185 residues: Elongation factor P (185 aa).

The protein belongs to the elongation factor P family.

It localises to the cytoplasm. The protein operates within protein biosynthesis; polypeptide chain elongation. Its function is as follows. Involved in peptide bond synthesis. Stimulates efficient translation and peptide-bond synthesis on native or reconstituted 70S ribosomes in vitro. Probably functions indirectly by altering the affinity of the ribosome for aminoacyl-tRNA, thus increasing their reactivity as acceptors for peptidyl transferase. This is Elongation factor P from Methylobacillus flagellatus (strain ATCC 51484 / DSM 6875 / VKM B-1610 / KT).